We begin with the raw amino-acid sequence, 332 residues long: MPNTHDTKNNVSPSEYAKFDPSTIHQRLNTSLSRPQLNSDGSIRHFLGVEGLNKAQLQAIIAKALFFEPSTRTRTTFEVAEKRLGANVLNLDIASSSAKKGESLRDTLWNLQAMTADIFVVRHSASGAAHFMATEVTPDIAIINGGDGWHAHPTQGMLDMLTIHREAPRPFEELSVAIIGDVKHSRVARSDISALQTLGVKDIRVIAPRTLLPKGIERFGVQVYEDMNSCVRDCDVIMGLRIQNERIGSPLLASSSEYYKQYGITPERVALAKPDALIMHPGPMNRGVEIASSVADGPQSVILKQVSNGVAIRMAVLALTMEGQRAHQANRG.

Residues 1 to 20 form a disordered region; that stretch reads MPNTHDTKNNVSPSEYAKFD. Carbamoyl phosphate-binding residues include R72 and T73. K100 contributes to the L-aspartate binding site. 3 residues coordinate carbamoyl phosphate: R122, H152, and Q155. L-aspartate is bound by residues R186 and R241. Residues G282 and P283 each coordinate carbamoyl phosphate.

Belongs to the aspartate/ornithine carbamoyltransferase superfamily. ATCase family. Heterododecamer (2C3:3R2) of six catalytic PyrB chains organized as two trimers (C3), and six regulatory PyrI chains organized as three dimers (R2).

The catalysed reaction is carbamoyl phosphate + L-aspartate = N-carbamoyl-L-aspartate + phosphate + H(+). Its pathway is pyrimidine metabolism; UMP biosynthesis via de novo pathway; (S)-dihydroorotate from bicarbonate: step 2/3. Its function is as follows. Catalyzes the condensation of carbamoyl phosphate and aspartate to form carbamoyl aspartate and inorganic phosphate, the committed step in the de novo pyrimidine nucleotide biosynthesis pathway. In Psychrobacter sp. (strain TAD1), this protein is Aspartate carbamoyltransferase catalytic subunit.